A 370-amino-acid chain; its full sequence is 3-hydroxy-3-methylglutaryl-CoA lyase, cytoplasmic (370 aa).

Residue glycine 2 is the site of N-myristoyl glycine attachment. The Pyruvate carboxyltransferase domain maps to 78 to 345; it reads VKIVEVGPRD…NTGVNLYKVM (268 aa). Substrate is bound at residue arginine 86. A divalent metal cation-binding residues include aspartate 87, histidine 278, and histidine 280. The active site involves cysteine 311. Residue asparagine 320 coordinates a divalent metal cation.

It belongs to the HMG-CoA lyase family. Requires a divalent metal cation as cofactor.

It localises to the cytoplasm. Its subcellular location is the cytosol. The protein localises to the endoplasmic reticulum membrane. The enzyme catalyses (3S)-3-hydroxy-3-methylglutaryl-CoA = acetoacetate + acetyl-CoA. It participates in metabolic intermediate metabolism; (S)-3-hydroxy-3-methylglutaryl-CoA degradation; acetoacetate from (S)-3-hydroxy-3-methylglutaryl-CoA: step 1/1. Functionally, non-mitochondrial 3-hydroxy-3-methylglutaryl-CoA lyase that catalyzes a cation-dependent cleavage of (S)-3-hydroxy-3-methylglutaryl-CoA into acetyl-CoA and acetoacetate, a key step in ketogenesis, the products of which support energy production in nonhepatic animal tissues. This chain is 3-hydroxy-3-methylglutaryl-CoA lyase, cytoplasmic (HMGCLL1), found in Homo sapiens (Human).